The following is a 962-amino-acid chain: Phenylalanine--tRNA ligase beta subunit (962 aa).

Residues 85–201 form the tRNA-binding domain; sequence TIRWCKVRVC…AEVFQGDELS (117 aa). The B5 domain maps to 456–538; that stretch reads TQQSPILLST…RVIGFNRIPS (83 aa). Mg(2+) contacts are provided by Asp-516, Asp-522, Glu-525, and Glu-526. Residues 621-675 are insert; sequence PDSTHNPDSGSDPIIPTGVTRITEPGSSGVSGPGNVGVKEKCSADTSIEHAPTTR. One can recognise an FDX-ACB domain in the interval 870 to 961; that stretch reads PTSPAATQHL…ASSKFGAIMR (92 aa).

This sequence belongs to the phenylalanyl-tRNA synthetase beta subunit family. Type 1 subfamily. As to quaternary structure, tetramer of two alpha and two beta subunits. Mg(2+) serves as cofactor.

The protein resides in the cytoplasm. It carries out the reaction tRNA(Phe) + L-phenylalanine + ATP = L-phenylalanyl-tRNA(Phe) + AMP + diphosphate + H(+). This is Phenylalanine--tRNA ligase beta subunit from Tropheryma whipplei (strain Twist) (Whipple's bacillus).